A 192-amino-acid polypeptide reads, in one-letter code: Peptidyl-tRNA hydrolase (192 aa).

Tyrosine 17 is a binding site for tRNA. Histidine 22 functions as the Proton acceptor in the catalytic mechanism. TRNA-binding residues include phenylalanine 68, asparagine 70, and asparagine 116.

It belongs to the PTH family. Monomer.

The protein resides in the cytoplasm. The enzyme catalyses an N-acyl-L-alpha-aminoacyl-tRNA + H2O = an N-acyl-L-amino acid + a tRNA + H(+). In terms of biological role, hydrolyzes ribosome-free peptidyl-tRNAs (with 1 or more amino acids incorporated), which drop off the ribosome during protein synthesis, or as a result of ribosome stalling. Functionally, catalyzes the release of premature peptidyl moieties from peptidyl-tRNA molecules trapped in stalled 50S ribosomal subunits, and thus maintains levels of free tRNAs and 50S ribosomes. This Buchnera aphidicola subsp. Cinara cedri (strain Cc) protein is Peptidyl-tRNA hydrolase.